The sequence spans 338 residues: Mitoferrin-1 (338 aa).

A disordered region spans residues 1-42 (MELRSGSVGSQAVARRMDGDSRDGGGGKDATGSEDYENLPTS). Residues 15–26 (RRMDGDSRDGGG) show a composition bias toward basic and acidic residues. Solcar repeat units lie at residues 43 to 131 (ASVS…MKRT), 141 to 225 (NSHL…LQEQ), and 232 to 326 (YNPQ…FKYF). 6 helical membrane-spanning segments follow: residues 45–64 (VSTH…SVMY), 106–125 (GVNV…FACY), 143–162 (HLAN…AVMN), 200–219 (SYTT…FITY), 234–253 (PQSH…AATT), and 301–320 (GIQA…WSVY).

It belongs to the mitochondrial carrier (TC 2.A.29) family. As to quaternary structure, interacts with ACB10; this interaction stabilizes SLC25A37 and enhances the function of SLC25A37 to import mitochondrial iron during erythroid differentiation.

It is found in the mitochondrion inner membrane. The catalysed reaction is Fe(2+)(in) = Fe(2+)(out). Its function is as follows. Mitochondrial iron transporter that specifically mediates iron uptake in developing erythroid cells, thereby playing an essential role in heme biosynthesis. In Homo sapiens (Human), this protein is Mitoferrin-1 (SLC25A37).